The following is a 364-amino-acid chain: Serine/threonine-protein kinase ENV7 (364 aa).

Residues Cys-13, Cys-14, and Cys-15 are each lipidated (S-palmitoyl cysteine). The 335-residue stretch at 30-364 folds into the Protein kinase domain; the sequence is YRIQRLLGEG…LLNLLQDLDT (335 aa). ATP is bound by residues 36–44 and Lys-69; that span reads LGEGGMSFV. Asp-215 serves as the catalytic Proton acceptor.

It belongs to the protein kinase superfamily. Ser/Thr protein kinase family.

The protein resides in the vacuole membrane. It carries out the reaction L-seryl-[protein] + ATP = O-phospho-L-seryl-[protein] + ADP + H(+). The enzyme catalyses L-threonyl-[protein] + ATP = O-phospho-L-threonyl-[protein] + ADP + H(+). Serine/threonine-protein kinase involved in vacuolar processing and morphology. The chain is Serine/threonine-protein kinase ENV7 (ENV7) from Saccharomyces cerevisiae (strain ATCC 204508 / S288c) (Baker's yeast).